The chain runs to 217 residues: Proteasome subunit beta type-6-B like protein (217 aa).

A propeptide spans 1–16 (removed in mature form); it reads MERHFMDSQIKGVSTG. Residue threonine 17 is the Nucleophile of the active site.

The protein belongs to the peptidase T1B family. In terms of assembly, the 26S proteasome consists of a 20S proteasome core and two 19S regulatory subunits. The 20S proteasome core is composed of 28 subunits that are arranged in four stacked rings, resulting in a barrel-shaped structure. The two end rings are each formed by seven alpha subunits, and the two central rings are each formed by seven beta subunits. The catalytic chamber with the active sites is on the inside of the barrel.

It localises to the cytoplasm. Its subcellular location is the nucleus. It catalyses the reaction Cleavage of peptide bonds with very broad specificity.. The proteasome is a multicatalytic proteinase complex which is characterized by its ability to cleave peptides with Arg, Phe, Tyr, Leu, and Glu adjacent to the leaving group at neutral or slightly basic pH. The proteasome has an ATP-dependent proteolytic activity. This subunit is involved in antigen processing to generate class I binding peptides. This is Proteasome subunit beta type-6-B like protein (psmb6l-b) from Salmo salar (Atlantic salmon).